Consider the following 596-residue polypeptide: Mitoguardin 2 (596 aa).

The next 2 helical transmembrane spans lie at 11–31 (IMQA…STFG) and 40–60 (LSPS…ALAL). Disordered regions lie at residues 67–158 (RRGR…AAWE) and 576–596 (ALPK…GQQD). A compositionally biased stretch (polar residues) spans 110-123 (MSPSTRSNDTLSGV). The span at 124–140 (SSIAQSKHSSSSHSIAS) shows a compositional bias: low complexity. Polar residues-rich tracts occupy residues 143–152 (VPSSPNQSVN) and 583–596 (QAES…GQQD).

Belongs to the mitoguardin family. In terms of assembly, homodimer and heterodimer; forms heterodimers with miga1.

The protein resides in the mitochondrion outer membrane. Functionally, regulator of mitochondrial fusion: acts by forming homo- and heterodimers at the mitochondrial outer membrane and facilitating the formation of pld6/MitoPLD dimers. May act by regulating phospholipid metabolism via pld6/MitoPLD. This chain is Mitoguardin 2, found in Danio rerio (Zebrafish).